The chain runs to 305 residues: tRNA pseudouridine synthase B (305 aa).

Aspartate 48 functions as the Nucleophile in the catalytic mechanism.

It belongs to the pseudouridine synthase TruB family. Type 1 subfamily.

The catalysed reaction is uridine(55) in tRNA = pseudouridine(55) in tRNA. In terms of biological role, responsible for synthesis of pseudouridine from uracil-55 in the psi GC loop of transfer RNAs. The polypeptide is tRNA pseudouridine synthase B (Pseudomonas fluorescens (strain Pf0-1)).